A 357-amino-acid polypeptide reads, in one-letter code: 3-isopropylmalate dehydrogenase (357 aa).

Residues Arg-97, Arg-107, Arg-135, and Asp-224 each coordinate substrate. Asp-224, Asp-248, and Asp-252 together coordinate Mg(2+). An NAD(+)-binding site is contributed by 282–294; sequence GSAPDIAGQDKAN.

It belongs to the isocitrate and isopropylmalate dehydrogenases family. LeuB type 1 subfamily. Homodimer. Mg(2+) serves as cofactor. Mn(2+) is required as a cofactor.

Its subcellular location is the cytoplasm. The enzyme catalyses (2R,3S)-3-isopropylmalate + NAD(+) = 4-methyl-2-oxopentanoate + CO2 + NADH. It participates in amino-acid biosynthesis; L-leucine biosynthesis; L-leucine from 3-methyl-2-oxobutanoate: step 3/4. In terms of biological role, catalyzes the oxidation of 3-carboxy-2-hydroxy-4-methylpentanoate (3-isopropylmalate) to 3-carboxy-4-methyl-2-oxopentanoate. The product decarboxylates to 4-methyl-2 oxopentanoate. The sequence is that of 3-isopropylmalate dehydrogenase from Synechococcus sp. (strain CC9902).